The following is a 350-amino-acid chain: MAAFINSKTNIIDLKNITVLFKNQRKEVRAVDNVNLAVERGDIFGIIGYSGAGKSTLVRTINLLQKPTNGSVIVNGIDIKKIDEKNLRVVRHKIGMIFQHFNLMSSRSVLGNIEYPLLDQKINRKKRQQRALELLKLVGLQEYVSAYPSQLSGGQKQRVAIARALANNPEILISDESTSALDPKTTESILELLKDLNKKLNLTIVLITHEMQVIKSICHNVAVMESGKIIEEGKVTDIFIDPSREVTQDFVDTSTNVKNAIKRIIKNTKFKIPGINQELVYLKFVGQSANEGIISKIVKKFRISFNILFANVDQVDGEDIGHMIIAFSGEDSLIKNHWMHLLKMVFEHKY.

The 240-residue stretch at 12-251 (IDLKNITVLF…PSREVTQDFV (240 aa)) folds into the ABC transporter domain. An ATP-binding site is contributed by 48–55 (GYSGAGKS).

Belongs to the ABC transporter superfamily. Methionine importer (TC 3.A.1.24) family. As to quaternary structure, the complex is composed of two ATP-binding proteins (MetN), two transmembrane proteins (MetI) and a solute-binding protein (MetQ).

It is found in the cell membrane. It carries out the reaction L-methionine(out) + ATP + H2O = L-methionine(in) + ADP + phosphate + H(+). It catalyses the reaction D-methionine(out) + ATP + H2O = D-methionine(in) + ADP + phosphate + H(+). Part of the ABC transporter complex MetNIQ involved in methionine import. Responsible for energy coupling to the transport system. The chain is Methionine import ATP-binding protein MetN 1 from Oenococcus oeni (strain ATCC BAA-331 / PSU-1).